A 1041-amino-acid chain; its full sequence is Toll-like receptor 8 (1041 aa).

Positions 1-26 (MENMFLQSSMLTCIFLLISGSCELCA) are cleaved as a signal peptide. At 27–827 (EENFSRSYPC…ELTTCVSDVT (801 aa)) the chain is on the extracellular side. Residues Asn29, Asn42, Asn80, Asn88, and Asn115 are each glycosylated (N-linked (GlcNAc...) asparagine). An intrachain disulfide couples Cys36 to Cys49. LRR repeat units lie at residues 126–147 (NLRELLLEDNQLPQIPSGLPES), 148–168 (LTELSLIQNNIYNITKEGISR), 171–193 (NLKNLYLAWNCYFNKVCEKTNIE), 202–223 (NLELLSLSFNSLSHVPPKLPSS), 224–244 (LRKLFLSNTQIKYISEEDFKG), and 247–268 (NLTLLDLSGNCPRCFNAPFPCV). N-linked (GlcNAc...) asparagine glycosylation is present at Asn160. Cys181 and Cys187 are joined by a disulfide. A glycan (N-linked (GlcNAc...) asparagine) is linked at Asn247. 2 disulfides stabilise this stretch: Cys257–Cys270 and Cys260–Cys267. N-linked (GlcNAc...) asparagine glycosylation is found at Asn285 and Asn293. LRR repeat units follow at residues 288 to 309 (QLRYLNLSSTSLRKINAAWFKN), 312 to 334 (HLKVLDLEFNYLVGEIASGAFLT), and 338 to 360 (RLEILDLSFNYIKGSYPQHINIS). N-linked (GlcNAc...) asparagine glycans are attached at residues Asn358 and Asn362. 3 LRR repeats span residues 368 to 389 (SLRALHLRGYVFQELREDDFQP), 395 to 416 (NLSTINLGINFIKQIDFKLFQN), and 419 to 440 (NLEIIYLSENRISPLVKDTRQS). Asn395 and Asn416 each carry an N-linked (GlcNAc...) asparagine glycan. Asn443 is a glycosylation site (N-linked (GlcNAc...) asparagine). An intrachain disulfide couples Cys479 to Cys509. 4 LRR repeats span residues 482 to 503 (YGKALDLSLNSIFFIGPNQFEN), 506 to 527 (DIACLNLSANSNAQVLSGTEFS), 531 to 551 (HVKYLDLTNNRLDFDNASALT), and 555 to 577 (DLEVLDLSYNSHYFRIAGVTHHL). N-linked (GlcNAc...) asparagine glycans are attached at residues Asn511 and Asn546. 2 N-linked (GlcNAc...) asparagine glycosylation sites follow: Asn582 and Asn590. LRR repeat units follow at residues 585–606 (NLKVLNLSHNNIYTLTDKYNLE), 609–630 (SLVELVFSGNRLDILWNDDDNR), 640–661 (NLTRLDLSLNRLKHIPNEAFLN), 665–685 (SLTELHINDNMLKFFNWTLLQ), 689–710 (RLELLDLRGNKLLFLTDSLSDF), 713–734 (SLRTLLLSHNRISHLPSGFLSE), and 737–758 (SLKHLDLSSNLLKTINKSALET). N-linked (GlcNAc...) asparagine glycosylation is found at Asn640 and Asn680. N-linked (GlcNAc...) asparagine glycosylation is present at Asn752. Residues 772 to 824 (NPFECTCDIGDFRRWMDEHLNVKIPRLVDVICASPGDQRGKSIVSLELTTCVS) form the LRRCT domain. Cysteines 776 and 803 form a disulfide. A helical transmembrane segment spans residues 828-848 (AVILFFFTFFITTMVMLAALA). Residues 849 to 1041 (HHLFYWDVWF…NMYVDSIKQY (193 aa)) lie on the Cytoplasmic side of the membrane. Residues 878-1022 (TFYDAYISYD…LFWQTLRNVV (145 aa)) enclose the TIR domain.

This sequence belongs to the Toll-like receptor family. Homodimer. Interacts with MYD88 via their respective TIR domains. Interacts with UNC93B1. Interacts with BTK. Interacts with SMPDL3B. Post-translationally, ubiquitinated by RNF216; leading to degradation by the proteasome. In terms of processing, proteolytic processing occurs in monocytes and monocyte-derived macrophages by both furin-like proprotein convertase and cathepsins. The cleavage is necessary for dimer formation and subsequent activation. As to expression, expressed in myeloid dendritic cells, monocytes, and monocyte-derived dendritic cells.

The protein localises to the endosome membrane. Activated by RNAs having enough uridines. Its function is as follows. Endosomal receptor that plays a key role in innate and adaptive immunity. Controls host immune response against pathogens through recognition of RNA degradation products specific to microorganisms that are initially processed by RNASET2. Recognizes GU-rich single-stranded RNA (GU-rich RNA) derived from SARS-CoV-2, SARS-CoV-1 and HIV-1 viruses. Upon binding to agonists, undergoes dimerization that brings TIR domains from the two molecules into direct contact, leading to the recruitment of TIR-containing downstream adapter MYD88 through homotypic interaction. In turn, the Myddosome signaling complex is formed involving IRAK4, IRAK1, TRAF6, TRAF3 leading to activation of downstream transcription factors NF-kappa-B and IRF7 to induce pro-inflammatory cytokines and interferons, respectively. The sequence is that of Toll-like receptor 8 from Homo sapiens (Human).